Here is a 337-residue protein sequence, read N- to C-terminus: 4-hydroxyproline 2-epimerase (337 aa).

Residue cysteine 91 is the Proton acceptor of the active site. Residues 92-93 (GH), aspartate 252, and 257-258 (GT) contribute to the substrate site.

It belongs to the proline racemase family.

The catalysed reaction is trans-4-hydroxy-L-proline = cis-4-hydroxy-D-proline. Functionally, catalyzes the epimerization of trans-4-hydroxy-L-proline (t4LHyp) to cis-4-hydroxy-D-proline (c4DHyp). Is involved in a degradation pathway that converts t4LHyp to alpha-ketoglutarate, which allows R.sphaeroides to grow on t4LHyp as a sole carbon source. Displays no proline racemase activity. The sequence is that of 4-hydroxyproline 2-epimerase from Cereibacter sphaeroides (strain ATCC 17023 / DSM 158 / JCM 6121 / CCUG 31486 / LMG 2827 / NBRC 12203 / NCIMB 8253 / ATH 2.4.1.) (Rhodobacter sphaeroides).